A 276-amino-acid chain; its full sequence is NAD kinase (276 aa).

The active-site Proton acceptor is aspartate 61. NAD(+) contacts are provided by residues 61–62, 134–135, arginine 145, lysine 162, aspartate 164, valine 172, 175–180, and glutamine 234; these read DG, ND, and TAYSFS.

It belongs to the NAD kinase family. It depends on a divalent metal cation as a cofactor.

It is found in the cytoplasm. The enzyme catalyses NAD(+) + ATP = ADP + NADP(+) + H(+). Involved in the regulation of the intracellular balance of NAD and NADP, and is a key enzyme in the biosynthesis of NADP. Catalyzes specifically the phosphorylation on 2'-hydroxyl of the adenosine moiety of NAD to yield NADP. This chain is NAD kinase, found in Clostridium perfringens (strain 13 / Type A).